Here is a 116-residue protein sequence, read N- to C-terminus: Fluoride-specific ion channel FluC 1 (116 aa).

4 consecutive transmembrane segments (helical) span residues 1-21 (MYAP…RYLV), 32-52 (FPLG…WLAG), 54-74 (GAAD…FTTF), and 93-113 (VVVY…LGYH). The Na(+) site is built by G69 and T72.

This sequence belongs to the fluoride channel Fluc/FEX (TC 1.A.43) family.

Its subcellular location is the cell membrane. The catalysed reaction is fluoride(in) = fluoride(out). With respect to regulation, na(+) is not transported, but it plays an essential structural role and its presence is essential for fluoride channel function. Its function is as follows. Fluoride-specific ion channel. Important for reducing fluoride concentration in the cell, thus reducing its toxicity. This Geobacillus kaustophilus (strain HTA426) protein is Fluoride-specific ion channel FluC 1.